A 568-amino-acid chain; its full sequence is AP2-like ethylene-responsive transcription factor PLT2 (568 aa).

Positions 151-171 (ASPAETSADNSSSTTNTSGGA) are enriched in low complexity. The disordered stretch occupies residues 151–173 (ASPAETSADNSSSTTNTSGGAIV). DNA-binding regions (AP2/ERF) lie at residues 190–256 (IYRG…TNFP) and 292–350 (MYRG…TNFE). The interval 548 to 568 (WNSGESAQGSNPGGVFTMWNE) is disordered.

This sequence belongs to the AP2/ERF transcription factor family. AP2 subfamily. Stabilized in root meristems by reactive oxygen species (ROS) mediated oxidative post-translational modification triggered by RGF1 hormone peptide in a RITF1-dependent manner. In terms of tissue distribution, expressed in roots, seedlings, flowers, and siliques. Also detected at low levels in leaves. In roots, specifically detected in the distal root meristem, including the QC. This tissue specificity is regulated by auxin gradient and depends on PIN proteins.

The protein resides in the nucleus. Probably acts as a transcriptional activator. Binds to the GCC-box pathogenesis-related promoter element. May be involved in the regulation of gene expression by stress factors and by components of stress signal transduction pathways. Master regulator of basal/root fate. Essential for root quiescent center (QC) and columella specification, stem cell activity, as well as for establishment of the stem cell niche during embryogenesis. Modulates the root polar auxin transport by regulating the distribution of PIN genes. Essential role in respecifying pattern and polarity in damaged roots. Direct target of the transcriptional corepressor TPL. Expression levels and patterns regulated post-transcriptionally by root meristem growth factors (RGFs). This is AP2-like ethylene-responsive transcription factor PLT2 from Arabidopsis thaliana (Mouse-ear cress).